The sequence spans 341 residues: MPIRDQIIQIVRGHDLSEDQAAEAMEEIMTGMATPAQVAALLTALHLKGETDAEIAGMARVMRAKAIPVHFDAPLLDTCGTGGDGAGTFNISTTAAFIAAGAGAIVAKHGNRAMSSVCGSADVLEGLGVNIELDAASVARCLDQAGIGFMFAQKFHPAMRFVGPVRREIGIRTVFNILGPLSNPAHARHQVLGVADPALAEKMARALHLLGTQHALVIHGHGGLDELTLSGPNLVIDVRAGHTPRRYEVTAADLGLAPAPREALRGGDVSVNVAIVRGILSGEDQSARRDVALLNAAAALVAADRAADLRDGLHQARHSLESGAALARLERLITVSRGGEG.

5-phospho-alpha-D-ribose 1-diphosphate contacts are provided by residues Gly80, 83 to 84, Thr88, 90 to 93, 108 to 116, and Ser120; these read GD, NIST, and KHGNRAMSS. Residue Gly80 coordinates anthranilate. Mg(2+) is bound at residue Ser92. Asn111 provides a ligand contact to anthranilate. Position 166 (Arg166) interacts with anthranilate. The Mg(2+) site is built by Asp225 and Glu226.

Belongs to the anthranilate phosphoribosyltransferase family. In terms of assembly, homodimer. The cofactor is Mg(2+).

The enzyme catalyses N-(5-phospho-beta-D-ribosyl)anthranilate + diphosphate = 5-phospho-alpha-D-ribose 1-diphosphate + anthranilate. It functions in the pathway amino-acid biosynthesis; L-tryptophan biosynthesis; L-tryptophan from chorismate: step 2/5. Functionally, catalyzes the transfer of the phosphoribosyl group of 5-phosphorylribose-1-pyrophosphate (PRPP) to anthranilate to yield N-(5'-phosphoribosyl)-anthranilate (PRA). This chain is Anthranilate phosphoribosyltransferase, found in Roseiflexus sp. (strain RS-1).